A 297-amino-acid chain; its full sequence is N-acetylmuramic acid 6-phosphate etherase (297 aa).

Positions 55-218 constitute an SIS domain; it reads AAAALKSGGR…STGAMVKFGK (164 aa). E83 serves as the catalytic Proton donor. E114 is a catalytic residue.

This sequence belongs to the GCKR-like family. MurNAc-6-P etherase subfamily. As to quaternary structure, homodimer.

The enzyme catalyses N-acetyl-D-muramate 6-phosphate + H2O = N-acetyl-D-glucosamine 6-phosphate + (R)-lactate. It functions in the pathway amino-sugar metabolism; 1,6-anhydro-N-acetylmuramate degradation. The protein operates within amino-sugar metabolism; N-acetylmuramate degradation. Its pathway is cell wall biogenesis; peptidoglycan recycling. Its function is as follows. Specifically catalyzes the cleavage of the D-lactyl ether substituent of MurNAc 6-phosphate, producing GlcNAc 6-phosphate and D-lactate. Together with AnmK, is also required for the utilization of anhydro-N-acetylmuramic acid (anhMurNAc) either imported from the medium or derived from its own cell wall murein, and thus plays a role in cell wall recycling. The protein is N-acetylmuramic acid 6-phosphate etherase of Salmonella typhi.